The sequence spans 289 residues: Proteasome assembly chaperone 1 (289 aa).

The segment at 1 to 38 is disordered; the sequence is MAATFFGEVVKAPCRAGTEEEEEEEEQSRRDTPEDREV. Ala-2 carries the post-translational modification N-acetylalanine. Thr-18 carries the post-translational modification Phosphothreonine. The segment covering 27–38 has biased composition (basic and acidic residues); sequence QSRRDTPEDREV. Thr-55 bears the Phosphothreonine mark. Ser-181 carries the phosphoserine modification. N6-acetyllysine is present on Lys-265.

It belongs to the PSMG1 family. Forms a heterodimer with PSMG2. The PSMG1-PSMG2 heterodimer interacts directly with the PSMA5 and PSMA7 proteasome alpha subunits. In terms of processing, degraded by the proteasome upon completion of 20S proteasome maturation. As to expression, highly expressed in testis with moderate expression in brain, liver and kidney and low levels in heart, skeletal muscle and pancreas.

It localises to the cytoplasm. The protein resides in the endoplasmic reticulum. Chaperone protein which promotes assembly of the 20S proteasome as part of a heterodimer with PSMG2. The PSMG1-PSMG2 heterodimer binds to the PSMA5 and PSMA7 proteasome subunits, promotes assembly of the proteasome alpha subunits into the heteroheptameric alpha ring and prevents alpha ring dimerization. This chain is Proteasome assembly chaperone 1, found in Mus musculus (Mouse).